Reading from the N-terminus, the 148-residue chain is 3-dehydroquinate dehydratase (148 aa).

The active-site Proton acceptor is Tyr-23. Substrate is bound by residues Asn-74, His-80, and Asp-87. The active-site Proton donor is the His-100. Substrate contacts are provided by residues 101 to 102 and Arg-111; that span reads IS.

This sequence belongs to the type-II 3-dehydroquinase family. As to quaternary structure, homododecamer.

The enzyme catalyses 3-dehydroquinate = 3-dehydroshikimate + H2O. It functions in the pathway metabolic intermediate biosynthesis; chorismate biosynthesis; chorismate from D-erythrose 4-phosphate and phosphoenolpyruvate: step 3/7. Catalyzes a trans-dehydration via an enolate intermediate. This Anoxybacillus flavithermus (strain DSM 21510 / WK1) protein is 3-dehydroquinate dehydratase.